A 308-amino-acid chain; its full sequence is Ornithine carbamoyltransferase (308 aa).

Carbamoyl phosphate-binding positions include 57 to 60 (STRT), Q84, R108, and 135 to 138 (HPCQ). Residues N166, D224, and 228 to 229 (SM) each bind L-ornithine. Residues 264-265 (CL) and R292 contribute to the carbamoyl phosphate site.

The protein belongs to the aspartate/ornithine carbamoyltransferase superfamily. OTCase family.

Its subcellular location is the cytoplasm. The catalysed reaction is carbamoyl phosphate + L-ornithine = L-citrulline + phosphate + H(+). It participates in amino-acid degradation; L-arginine degradation via ADI pathway; carbamoyl phosphate from L-arginine: step 2/2. In terms of biological role, reversibly catalyzes the transfer of the carbamoyl group from carbamoyl phosphate (CP) to the N(epsilon) atom of ornithine (ORN) to produce L-citrulline. In Ralstonia pickettii (strain 12J), this protein is Ornithine carbamoyltransferase.